The following is a 109-amino-acid chain: uncharacterized protein (109 aa).

The chain crosses the membrane as a helical span at residues 12–32 (PNILIKGVYIFVLYGMCICIV).

It localises to the membrane. This is an uncharacterized protein from Saccharomyces cerevisiae (strain ATCC 204508 / S288c) (Baker's yeast).